Consider the following 495-residue polypeptide: Protein-serine O-palmitoleoyltransferase porcupine (495 aa).

The next 8 membrane-spanning stretches (helical) occupy residues 46-66, 92-112, 184-204, 232-252, 358-378, 403-422, 434-454, and 475-495; these read TQYITNFIAINLLFSVLVLIV, VIDHGFYHFLQLAVSLYAVQW, TVLSYSGYILCPANIVLGPWI, MLIHVFRIVTSALMAVGFLLT, PFGTGTAIALTYIISSLLHGL, LATIYSACVLVGKCPSSCTV, VINMLFFALNIFNLIYLGCIF, and TELNYASHWLLVFAYLFYFVI. The active site involves H376.

This sequence belongs to the membrane-bound acyltransferase family. Porcupine subfamily.

Its subcellular location is the endoplasmic reticulum membrane. It catalyses the reaction [Wnt protein]-L-serine + (9Z)-hexadecenoyl-CoA = [Wnt protein]-O-(9Z)-hexadecenoyl-L-serine + CoA. Functionally, protein-serine O-palmitoleoyltransferase that acts as a key regulator of the Wnt signaling pathway by mediating the attachment of palmitoleate, a 16-carbon monounsaturated fatty acid (C16:1(9Z)), to Wnt proteins. Serine palmitoleoylation of WNT proteins is required for efficient binding to frizzled receptors. The polypeptide is Protein-serine O-palmitoleoyltransferase porcupine (Anopheles gambiae (African malaria mosquito)).